Reading from the N-terminus, the 659-residue chain is UvrABC system protein B (659 aa).

In terms of domain architecture, Helicase ATP-binding spans 25–182 (QSIENGNRGQ…KKLIEIQYER (158 aa)). 38–45 (GVTGSGKT) contributes to the ATP binding site. The short motif at 91–114 (YYDYYQPEAYVPQTDTFIEKDASI) is the Beta-hairpin element. Residues 429 to 582 (QIDDLYGEIQ…QMEYNEEHNI (154 aa)) form the Helicase C-terminal domain. The UVR domain maps to 622–657 (EKLIEQYEEEMKEAAKNLQFERAAELRDIIKDLKEN).

Belongs to the UvrB family. Forms a heterotetramer with UvrA during the search for lesions. Interacts with UvrC in an incision complex.

It localises to the cytoplasm. The UvrABC repair system catalyzes the recognition and processing of DNA lesions. A damage recognition complex composed of 2 UvrA and 2 UvrB subunits scans DNA for abnormalities. Upon binding of the UvrA(2)B(2) complex to a putative damaged site, the DNA wraps around one UvrB monomer. DNA wrap is dependent on ATP binding by UvrB and probably causes local melting of the DNA helix, facilitating insertion of UvrB beta-hairpin between the DNA strands. Then UvrB probes one DNA strand for the presence of a lesion. If a lesion is found the UvrA subunits dissociate and the UvrB-DNA preincision complex is formed. This complex is subsequently bound by UvrC and the second UvrB is released. If no lesion is found, the DNA wraps around the other UvrB subunit that will check the other stand for damage. The polypeptide is UvrABC system protein B (Clostridium perfringens (strain ATCC 13124 / DSM 756 / JCM 1290 / NCIMB 6125 / NCTC 8237 / Type A)).